We begin with the raw amino-acid sequence, 349 residues long: Homeobox-leucine zipper protein HOX5 (349 aa).

Residues 83 to 142 (APEKKRRLTAEQVQMLERSFEEENKLEPERKTELARRLGMAPRQVAVWFQNRRARWKTKQ) constitute a DNA-binding region (homeobox). Residues 141–185 (KQLEHDFDRLKAAYDALAADHHALLSDNDRLRAQVISLTEKLQDK) are leucine-zipper. The interval 181–253 (KLQDKETSPS…GTNDDGDGGA (73 aa)) is disordered. A compositionally biased stretch (low complexity) spans 188 to 198 (SPSSATITTAA).

It belongs to the HD-ZIP homeobox family. Class I subfamily. In terms of assembly, homodimer. May form a heterodimer with HOX4. In terms of tissue distribution, expressed in seedlings, roots, leaves, nodes, internodes, flowers and embryo.

The protein resides in the nucleus. Probable transcription activator that binds to the DNA sequence 5'-CAAT[AT]ATTG-3'. The sequence is that of Homeobox-leucine zipper protein HOX5 (HOX5) from Oryza sativa subsp. japonica (Rice).